Consider the following 444-residue polypeptide: Platelet-activating factor acetylhydrolase (444 aa).

An N-terminal signal peptide occupies residues 1-21 (MLPSKLHALFCLCTCLALVYP). N-linked (GlcNAc...) asparagine glycosylation is found at Asn60 and Asn200. Ser274 (nucleophile) is an active-site residue. Catalysis depends on charge relay system residues Asp297 and His352. Residues Asn424 and Asn434 are each glycosylated (N-linked (GlcNAc...) asparagine).

The protein belongs to the AB hydrolase superfamily. Lipase family. In terms of processing, N-glycosylated. In terms of tissue distribution, plasma.

The protein localises to the secreted. It localises to the extracellular space. It catalyses the reaction a 1-O-alkyl-2-acetyl-sn-glycero-3-phosphocholine + H2O = a 1-O-alkyl-sn-glycero-3-phosphocholine + acetate + H(+). It carries out the reaction 1-O-decyl-2-acetyl-sn-glycero-3-phosphocholine + H2O = 1-O-decyl-sn-glycero-3-phosphocholine + acetate + H(+). The catalysed reaction is 1-O-dodecyl-2-acetyl-sn-glycero-3-phosphocholine + H2O = 1-O-dodecyl-sn-glycero-3-phosphocholine + acetate + H(+). The enzyme catalyses 1-O-tetradecyl-2-acetyl-sn-glycero-3-phosphocholine + H2O = 1-O-tetradecyl-sn-glycero-3-phosphocholine + acetate + H(+). It catalyses the reaction 1-O-hexadecyl-2-acetyl-sn-glycero-3-phosphocholine + H2O = 1-O-hexadecyl-sn-glycero-3-phosphocholine + acetate + H(+). It carries out the reaction 1-O-octadecyl-2-acetyl-sn-glycero-3-phosphocholine + H2O = 1-O-octadecyl-sn-glycero-3-phosphocholine + acetate + H(+). The catalysed reaction is 1-hexadecanoyl-2-acetyl-sn-glycero-3-phosphocholine + H2O = 1-hexadecanoyl-sn-glycero-3-phosphocholine + acetate + H(+). The enzyme catalyses 1-hexadecanoyl-2-propionyl-sn-glycero-3-phosphocholine + H2O = propanoate + 1-hexadecanoyl-sn-glycero-3-phosphocholine + H(+). It catalyses the reaction 1-hexadecanoyl-2-butanoyl-sn-glycero-3-phosphocholine + H2O = butanoate + 1-hexadecanoyl-sn-glycero-3-phosphocholine + H(+). It carries out the reaction 1-hexadecanoyl-2-pentanoyl-sn-glycero-3-phosphocholine + H2O = pentanoate + 1-hexadecanoyl-sn-glycero-3-phosphocholine + H(+). The catalysed reaction is 1-hexadecanoyl-2-glutaroyl-sn-glycero-3-phosphocholine + H2O = glutarate + 1-hexadecanoyl-sn-glycero-3-phosphocholine + H(+). The enzyme catalyses 1-hexadecanoyl-2-(5-oxopentanoyl)-sn-glycero-3-phosphocholine + H2O = 5-oxopentanoate + 1-hexadecanoyl-sn-glycero-3-phosphocholine + H(+). It catalyses the reaction 1-hexadecanoyl-2-(9-oxononanoyl)-sn-glycero-3-phosphocholine + H2O = 9-oxononanoate + 1-hexadecanoyl-sn-glycero-3-phosphocholine + H(+). It carries out the reaction 1-hexadecanoyl-2-[9-hydroperoxy-(10E-octadecenoyl)]-sn-glycero-3-phosphocholine + H2O = 9-hydroperoxy-10E-octadecenoate + 1-hexadecanoyl-sn-glycero-3-phosphocholine + H(+). The catalysed reaction is 1-hexadecanoyl-2-(10-hydroperoxy-8E-octadecenoyl)-sn-glycero-3-phosphocholine + H2O = 10-hydroperoxy-(8E)-octadecenoate + 1-hexadecanoyl-sn-glycero-3-phosphocholine + H(+). Its function is as follows. Lipoprotein-associated calcium-independent phospholipase A2 involved in phospholipid catabolism during inflammatory and oxidative stress response. At the lipid-aqueous interface, hydrolyzes the ester bond of fatty acyl group attached at sn-2 position of phospholipids (phospholipase A2 activity). Specifically targets phospholipids with a short-chain fatty acyl group at sn-2 position. Can hydrolyze phospholipids with long fatty acyl chains, only if they carry oxidized functional groups. Hydrolyzes and inactivates platelet-activating factor (PAF, 1-O-alkyl-2-acetyl-sn-glycero-3-phosphocholine), a potent pro-inflammatory signaling lipid that acts through PTAFR on various innate immune cells. Hydrolyzes oxidatively truncated phospholipids carrying an aldehyde group at omega position, preventing their accumulation in low-density lipoprotein (LDL) particles and uncontrolled pro-inflammatory effects. As part of high-density lipoprotein (HDL) particles, can hydrolyze phospholipids having long-chain fatty acyl hydroperoxides at sn-2 position and protect against potential accumulation of these oxylipins in the vascular wall. Catalyzes the release from membrane phospholipids of F2-isoprostanes, lipid biomarkers of cellular oxidative damage. This Bos taurus (Bovine) protein is Platelet-activating factor acetylhydrolase (PLA2G7).